The following is a 267-amino-acid chain: 3-methyl-2-oxobutanoate hydroxymethyltransferase (267 aa).

Residues aspartate 46 and aspartate 85 each contribute to the Mg(2+) site. Residues aspartate 46–serine 47, aspartate 85, and lysine 115 contribute to the 3-methyl-2-oxobutanoate site. Position 117 (glutamate 117) interacts with Mg(2+). Glutamate 184 acts as the Proton acceptor in catalysis.

It belongs to the PanB family. As to quaternary structure, homodecamer; pentamer of dimers. Mg(2+) is required as a cofactor.

It is found in the cytoplasm. The enzyme catalyses 3-methyl-2-oxobutanoate + (6R)-5,10-methylene-5,6,7,8-tetrahydrofolate + H2O = 2-dehydropantoate + (6S)-5,6,7,8-tetrahydrofolate. The protein operates within cofactor biosynthesis; (R)-pantothenate biosynthesis; (R)-pantoate from 3-methyl-2-oxobutanoate: step 1/2. Catalyzes the reversible reaction in which hydroxymethyl group from 5,10-methylenetetrahydrofolate is transferred onto alpha-ketoisovalerate to form ketopantoate. The chain is 3-methyl-2-oxobutanoate hydroxymethyltransferase from Geotalea uraniireducens (strain Rf4) (Geobacter uraniireducens).